Reading from the N-terminus, the 135-residue chain is Photosystem II extrinsic protein U (135 aa).

The N-terminal stretch at 1–26 (MKNLVRLLAVIALIIGSFWGKVPAQA) is a signal peptide.

Belongs to the PsbU family. In terms of assembly, PSII is composed of 1 copy each of membrane proteins PsbA, PsbB, PsbC, PsbD, PsbE, PsbF, PsbH, PsbI, PsbJ, PsbK, PsbL, PsbM, PsbT, PsbX, PsbY, PsbZ, Psb30/Ycf12, peripheral proteins PsbO, CyanoQ (PsbQ), PsbU, PsbV and a large number of cofactors. It forms dimeric complexes.

Its subcellular location is the cellular thylakoid membrane. Functionally, one of the extrinsic, lumenal subunits of photosystem II (PSII). PSII is a light-driven water plastoquinone oxidoreductase, using light energy to abstract electrons from H(2)O, generating a proton gradient subsequently used for ATP formation. The extrinsic proteins stabilize the structure of photosystem II oxygen-evolving complex (OEC), the ion environment of oxygen evolution and protect the OEC against heat-induced inactivation. This chain is Photosystem II extrinsic protein U, found in Microcystis aeruginosa (strain NIES-843 / IAM M-2473).